Reading from the N-terminus, the 713-residue chain is Segment polarity protein dishevelled homolog DVL-3 (713 aa).

A DIX domain is found at 1–82 (MGETKVIYHL…RVVCWLVSAD (82 aa)). Polar residues-rich tracts occupy residues 87-98 (DAGSVCADNQSD) and 118-127 (HPNTRGSQEN). The interval 87–235 (DAGSVCADNQ…PRIERSSSFS (149 aa)) is disordered. A compositionally biased stretch (basic and acidic residues) spans 140-155 (AHRERPRRKETPEHAT). Positions 173–189 (ESSSTLMSSELDSTSFF) are enriched in low complexity. Over residues 199–210 (RFSNSTEQSSAS) the composition is skewed to polar residues. Basic residues predominate over residues 212-225 (LMRRHKRRRRKPKA). The region spanning 248-333 (TVTLNMEKYN…KPGPITLTVA (86 aa)) is the PDZ domain. Positions 421 to 495 (PESGLEVRDR…SEQCYYIFGD (75 aa)) constitute a DEP domain. Over residues 508-518 (HDGSSGTSDQD) the composition is skewed to polar residues. Disordered regions lie at residues 508–527 (HDGS…PHPG) and 545–652 (YSPH…GPPG). The span at 564–579 (GSQHSEGSRSSGSNRS) shows a compositional bias: low complexity. Basic and acidic residues-rich tracts occupy residues 580–593 (STEK…KGGD) and 602–618 (ESDH…RAAS). The span at 629–646 (HRSHHSIAHSIRSHHTHH) shows a compositional bias: basic residues.

This sequence belongs to the DSH family.

The protein localises to the cytoplasm. In terms of biological role, involved in the signal transduction pathway mediated by multiple Wnt genes. Required during ciliogenesis for the docking of basal bodies to the apical plasma membrane. The sequence is that of Segment polarity protein dishevelled homolog DVL-3 from Xenopus tropicalis (Western clawed frog).